We begin with the raw amino-acid sequence, 250 residues long: UDP-2,3-diacylglucosamine hydrolase (250 aa).

5 residues coordinate Mn(2+): aspartate 8, histidine 10, aspartate 41, asparagine 79, and histidine 115. 79–80 serves as a coordination point for substrate; sequence NH. Aspartate 123, threonine 165, lysine 168, and histidine 196 together coordinate substrate. Mn(2+) is bound by residues histidine 196 and histidine 198.

Belongs to the LpxH family. The cofactor is Mn(2+).

The protein resides in the cell inner membrane. The enzyme catalyses UDP-2-N,3-O-bis[(3R)-3-hydroxytetradecanoyl]-alpha-D-glucosamine + H2O = 2-N,3-O-bis[(3R)-3-hydroxytetradecanoyl]-alpha-D-glucosaminyl 1-phosphate + UMP + 2 H(+). It functions in the pathway glycolipid biosynthesis; lipid IV(A) biosynthesis; lipid IV(A) from (3R)-3-hydroxytetradecanoyl-[acyl-carrier-protein] and UDP-N-acetyl-alpha-D-glucosamine: step 4/6. Functionally, hydrolyzes the pyrophosphate bond of UDP-2,3-diacylglucosamine to yield 2,3-diacylglucosamine 1-phosphate (lipid X) and UMP by catalyzing the attack of water at the alpha-P atom. Involved in the biosynthesis of lipid A, a phosphorylated glycolipid that anchors the lipopolysaccharide to the outer membrane of the cell. This chain is UDP-2,3-diacylglucosamine hydrolase, found in Blochmanniella pennsylvanica (strain BPEN).